Reading from the N-terminus, the 105-residue chain is Large ribosomal subunit protein bL21 (105 aa).

This sequence belongs to the bacterial ribosomal protein bL21 family. Part of the 50S ribosomal subunit. Contacts protein L20.

This protein binds to 23S rRNA in the presence of protein L20. The protein is Large ribosomal subunit protein bL21 of Methylobacterium sp. (strain 4-46).